A 304-amino-acid chain; its full sequence is tRNA dimethylallyltransferase (304 aa).

ATP is bound at residue 10–17 (GPTASGKS). 12-17 (TASGKS) is a binding site for substrate. Residues 35–38 (DSRQ) form an interaction with substrate tRNA region.

This sequence belongs to the IPP transferase family. In terms of assembly, monomer. Mg(2+) serves as cofactor.

The enzyme catalyses adenosine(37) in tRNA + dimethylallyl diphosphate = N(6)-dimethylallyladenosine(37) in tRNA + diphosphate. Functionally, catalyzes the transfer of a dimethylallyl group onto the adenine at position 37 in tRNAs that read codons beginning with uridine, leading to the formation of N6-(dimethylallyl)adenosine (i(6)A). The protein is tRNA dimethylallyltransferase of Gloeothece citriformis (strain PCC 7424) (Cyanothece sp. (strain PCC 7424)).